Consider the following 336-residue polypeptide: 25S rRNA (uridine(2634)-N(3))-methyltransferase (336 aa).

The disordered stretch occupies residues 286–307 (PGYHHRRTNSEQDTTKPAKERD). The segment covering 293 to 307 (TNSEQDTTKPAKERD) has biased composition (basic and acidic residues).

Belongs to the class I-like SAM-binding methyltransferase superfamily. BMT5 family.

It is found in the nucleus. It localises to the nucleolus. It carries out the reaction uridine(2634) in 25S rRNA + S-adenosyl-L-methionine = N(3)-methyluridine(2634) in 25S rRNA + S-adenosyl-L-homocysteine + H(+). S-adenosyl-L-methionine-dependent methyltransferase that specifically methylates the N(3) position of uridine 2634 (m3U2634) in 25S rRNA. The polypeptide is 25S rRNA (uridine(2634)-N(3))-methyltransferase (BMT5) (Saccharomyces cerevisiae (strain ATCC 204508 / S288c) (Baker's yeast)).